The primary structure comprises 651 residues: E3 SUMO-protein ligase PIAS1 (651 aa).

An N-acetylalanine modification is found at A2. The interval 2–200 is required for interaction with MSX1; the sequence is ADSAELKQMV…KCDFTVQVQL (199 aa). The 35-residue stretch at 11–45 folds into the SAP domain; that stretch reads VMSLRVSELQVLLGYAGRNKHGRKHELLTKALHLL. Residues 19–23 carry the LXXLL motif motif; it reads LQVLL. Glycyl lysine isopeptide (Lys-Gly) (interchain with G-Cter in SUMO2) cross-links involve residues K40 and K46. A Nuclear localization signal motif is present at residues 56-64; that stretch reads KIKELYRRR. The PINIT domain maps to 124-288; that stretch reads HLTSALHPVH…SMAVYLVKQL (165 aa). Residues K137 and K238 each participate in a glycyl lysine isopeptide (Lys-Gly) (interchain with G-Cter in SUMO2) cross-link. The SP-RING-type zinc-finger motif lies at 320 to 405; the sequence is PDSEIATTSL…LKYCTDCDEI (86 aa). Zn(2+) contacts are provided by C351, H353, C374, and C377. The Nuclear localization signal motif lies at 368-380; that stretch reads KKPTWVCPVCDKK. Residue K453 forms a Glycyl lysine isopeptide (Lys-Gly) (interchain with G-Cter in SUMO2) linkage. The SUMO1-binding stretch occupies residues 462–473; the sequence is LTIDSSSDEEEE. Residues 465–511 form a disordered region; it reads DSSSDEEEEEPSAKRTCPSLSPTSPLNNKGILSLPHQASPVSRTPSL. Residues S467, S468, S483, and S485 each carry the phosphoserine modification. A compositionally biased stretch (polar residues) spans 482-491; the sequence is PSLSPTSPLN. T487 bears the Phosphothreonine mark. S488 is modified (phosphoserine). K493 is covalently cross-linked (Glycyl lysine isopeptide (Lys-Gly) (interchain with G-Cter in SUMO2)). S503, S510, and S522 each carry phosphoserine. Tandem repeats lie at residues 520-523 and 557-560. The 4 X 4 AA repeats of N-T-S-L stretch occupies residues 520–615; sequence NTSLIQDYRH…GSSSGSNSSL (96 aa). Residues 598 to 601 form a 3; approximate repeat; it reads STSL. Residues 599-621 show a composition bias toward low complexity; sequence TSLPTTNGSSSGSNSSLVSSNSL. Residues 599–632 form a disordered region; the sequence is TSLPTTNGSSSGSNSSLVSSNSLRESHSHTVTNR. One copy of the 4; approximate repeat lies at 612–615; that stretch reads NSSL.

It belongs to the PIAS family. In terms of assembly, interacts with NCOA2 and AR. Interacts with NR2C1; the interaction promotes its sumoylation. Interacts with DDX21, CSRP2, AXIN1, JUN, UBE2I, SUMO1, SATB2, PLAG1, TP53 and STAT1 (dimer), following IFNA1-stimulation. Interacts with SP3 (preferentially when SUMO-modified). Interacts with KLF8; the interaction results in SUMO ligation and repression of KLF8 transcriptional activity and of its cell cycle progression into G(1) phase. Interacts with CHUK/IKKA; this interaction induces PIAS1 phosphorylation. Interacts with PTK2/FAK1; the interaction promotes its sumoylation. Interacts with DDX5. Interacts with PML. Interacts with MTA1. Interacts with SUMO1P1/SUMO5. Interacts with PRDM1/Blimp-1. Interacts (via N-terminus) with MSX1 (via C-terminus); the interaction is required for the localization of both proteins to the nuclear periphery and specific binding of MSX1 to the core enhancer region in target gene promoters. (Microbial infection) Interacts with ebolavirus VP35; this interaction mediates the sumoylation of IRF7 and contributes to the viral inhibition of IFN-type I production. Post-translationally, sumoylated. Expressed in numerous tissues with highest level in testis.

The protein localises to the nucleus. Its subcellular location is the nucleus speckle. It is found in the PML body. It localises to the cytoplasm. The protein resides in the cytoskeleton. It participates in protein modification; protein sumoylation. Functionally, functions as an E3-type small ubiquitin-like modifier (SUMO) ligase, stabilizing the interaction between UBE2I and the substrate, and as a SUMO-tethering factor. Catalyzes sumoylation of various proteins, such as CEBPB, MRE11, MTA1, PTK2 and PML. Plays a crucial role as a transcriptional coregulation in various cellular pathways, including the STAT pathway, the p53 pathway and the steroid hormone signaling pathway. In vitro, binds A/T-rich DNA. The effects of this transcriptional coregulation, transactivation or silencing, may vary depending upon the biological context. Mediates sumoylation of MRE11, stabilizing MRE11 on chromatin during end resection. Sumoylates PML (at 'Lys-65' and 'Lys-160') and PML-RAR and promotes their ubiquitin-mediated degradation. PIAS1-mediated sumoylation of PML promotes its interaction with CSNK2A1/CK2 which in turn promotes PML phosphorylation and degradation. Enhances the sumoylation of MTA1 and may participate in its paralog-selective sumoylation. Plays a dynamic role in adipogenesis by promoting the SUMOylation and degradation of CEBPB. Mediates the nuclear mobility and localization of MSX1 to the nuclear periphery, whereby MSX1 is brought into the proximity of target myoblast differentiation factor genes. Also required for the binding of MSX1 to the core enhancer region in target gene promoter regions, independent of its sumoylation activity. Capable of binding to the core enhancer region TAAT box in the MYOD1 gene promoter. Its function is as follows. (Microbial infection) Restricts Epstein-Barr virus (EBV) lytic replication by acting as an inhibitor for transcription factors involved in lytic gene expression. The virus can use apoptotic caspases to antagonize PIAS1-mediated restriction and express its lytic genes. The polypeptide is E3 SUMO-protein ligase PIAS1 (PIAS1) (Homo sapiens (Human)).